The primary structure comprises 620 residues: Palmitoyltransferase ZDHHC17 (620 aa).

At 1 to 292 (MADALVGYEK…LKMDKEFRQK (292 aa)) the chain is on the cytoplasmic side. ANK repeat units lie at residues 77–106 (ENVTLLHWAAINNRVDLVKYYISKGAIVDQ), 111–140 (LNSTPLHWATRQGHLSMVVQLMKYGADPSL), 144–173 (EGCSCVHLAAQFGHTSIVAYLIAKGQDVDM), 177–207 (NGMTPLMWAAYRTHSVDPTRLLLTFNVSVNL), 212–241 (HKNTALHWAVLAGNTTVISLLLEANANVDA), and 245–274 (KGETPLDLAKQRKNVWMINHLQEARQAKGY). 2 consecutive transmembrane segments (helical) span residues 293–313 (VMLGTPFLVIWLVGFIADLDI) and 314–334 (DSWLIKGVMYAVMWLVVQFLS). The Cytoplasmic portion of the chain corresponds to 335-345 (KSFFDHSMHSA). A helical transmembrane segment spans residues 346 to 366 (LPLGIYLATKFWMYITWFYWF). The Lumenal portion of the chain corresponds to 367–369 (WND). Residues 370–390 (LPFVTIHLPFLLNSLALFYNF) form a helical membrane-spanning segment. Residues 391–469 (GKSWKSDPGI…NCVGSGNHRY (79 aa)) are Cytoplasmic-facing. Positions 425–475 (IFCSTCLIRKPIRSKHCAVCNRCIAKFDHHCPWVGNCVGSGNHRYFMGYLF) constitute a DHHC domain. Residue Cys455 is the S-palmitoyl cysteine intermediate of the active site. Residues 470-490 (FMGYLFFLLCMICWMMYGCIC) traverse the membrane as a helical segment. At 491-504 (YWRIHCATSYTKDG) the chain is on the lumenal side. The helical transmembrane segment at 505–524 (FWIYITQIATCSPWMFWMFL) threads the bilayer. Over 525 to 620 (NSVFHFMWVA…QTSGSGYQLV (96 aa)) the chain is Cytoplasmic.

This sequence belongs to the DHHC palmitoyltransferase family. AKR/ZDHHC17 subfamily. Post-translationally, autopalmitoylated.

The protein resides in the golgi apparatus membrane. The protein localises to the cytoplasmic vesicle membrane. It is found in the presynaptic cell membrane. The catalysed reaction is L-cysteinyl-[protein] + hexadecanoyl-CoA = S-hexadecanoyl-L-cysteinyl-[protein] + CoA. It catalyses the reaction L-cysteinyl-[protein] + tetradecanoyl-CoA = S-tetradecanoyl-L-cysteinyl-[protein] + CoA. The enzyme catalyses L-cysteinyl-[protein] + octadecanoyl-CoA = S-octadecanoyl-L-cysteinyl-[protein] + CoA. Its function is as follows. Palmitoyltransferase that catalyzes the addition of palmitate onto various protein substrates and is involved in a variety of cellular processes. Has no stringent fatty acid selectivity and in addition to palmitate can also transfer onto target proteins myristate from tetradecanoyl-CoA and stearate from octadecanoyl-CoA. Plays a role in axonogenesis. This is Palmitoyltransferase ZDHHC17 from Danio rerio (Zebrafish).